The chain runs to 385 residues: Lipid-A-disaccharide synthase (385 aa).

This sequence belongs to the LpxB family.

The enzyme catalyses a lipid X + a UDP-2-N,3-O-bis[(3R)-3-hydroxyacyl]-alpha-D-glucosamine = a lipid A disaccharide + UDP + H(+). The protein operates within bacterial outer membrane biogenesis; LPS lipid A biosynthesis. Functionally, condensation of UDP-2,3-diacylglucosamine and 2,3-diacylglucosamine-1-phosphate to form lipid A disaccharide, a precursor of lipid A, a phosphorylated glycolipid that anchors the lipopolysaccharide to the outer membrane of the cell. In Xylella fastidiosa (strain M12), this protein is Lipid-A-disaccharide synthase.